Here is a 378-residue protein sequence, read N- to C-terminus: Ribosomal RNA large subunit methyltransferase G (378 aa).

Belongs to the methyltransferase superfamily. RlmG family.

It localises to the cytoplasm. The enzyme catalyses guanosine(1835) in 23S rRNA + S-adenosyl-L-methionine = N(2)-methylguanosine(1835) in 23S rRNA + S-adenosyl-L-homocysteine + H(+). Specifically methylates the guanine in position 1835 (m2G1835) of 23S rRNA. The polypeptide is Ribosomal RNA large subunit methyltransferase G (Citrobacter koseri (strain ATCC BAA-895 / CDC 4225-83 / SGSC4696)).